A 133-amino-acid chain; its full sequence is Small ribosomal subunit protein uS8 (133 aa).

Belongs to the universal ribosomal protein uS8 family. Part of the 30S ribosomal subunit.

One of the primary rRNA binding proteins, it binds directly to 16S rRNA central domain where it helps coordinate assembly of the platform of the 30S subunit. The sequence is that of Small ribosomal subunit protein uS8 from Saccharolobus solfataricus (strain ATCC 35092 / DSM 1617 / JCM 11322 / P2) (Sulfolobus solfataricus).